Reading from the N-terminus, the 338-residue chain is DNA-directed RNA polymerase subunit alpha (338 aa).

The alpha N-terminal domain (alpha-NTD) stretch occupies residues 1 to 234; sequence MIHKNWAELI…DQLSVFVNFD (234 aa). Residues 250–338 form an alpha C-terminal domain (alpha-CTD) region; it reads FDPRLLKKVD…DLAKRFDDQF (89 aa).

The protein belongs to the RNA polymerase alpha chain family. As to quaternary structure, homodimer. The RNAP catalytic core consists of 2 alpha, 1 beta, 1 beta' and 1 omega subunit. When a sigma factor is associated with the core the holoenzyme is formed, which can initiate transcription.

The catalysed reaction is RNA(n) + a ribonucleoside 5'-triphosphate = RNA(n+1) + diphosphate. DNA-dependent RNA polymerase catalyzes the transcription of DNA into RNA using the four ribonucleoside triphosphates as substrates. This is DNA-directed RNA polymerase subunit alpha from Paracoccus denitrificans (strain Pd 1222).